The primary structure comprises 789 residues: MLPCCEPLPLQTEKLELPSISQVHTRGPVDIPWYNHHAAERPLLSGDKLPALSLPTASQPPISGQSYRTSYEEASASHNASARTSLSGTAPVINEARSPPQSADLAAGGQGRLSLDSSAPQEFSIPQNTVGDSYYTNPTAIGSMNHTQPYMDVHSSHLSSAQPYASQAATAGGIAHYPQYHQQPPVLQPASTTYGPASSYQYAYPGGVTSSQPGPQPPTTSVSSQVPAQLLPLPVTSHTVAPAGYGNNTGTPMQGYVYDATGQVAPPGAKPRVTATLWEDEGSLCYQVEARGVCVARREDNHMINGTKLLNVAGMTRGRRDGILKSEKVRHVVKIGPMHLKGVWIPFERALEFANKEKITDLLYPLFVHNIGGLLYHPTNQTRTNMVVQESQQRRLEGPQATRASQGPQPPALHHHHSLQTPVPSHMSQPHAMTSQSAARPGLDRAHTFPTPPASASSLMGITNQGSSYEWGNQGMNSGVPNTQPLSIDTTLSNARSMPTTPATTPPGSNMQGMQAYQSQSGYDNSKSYYSAAPPSHPQYAPQQPLTQPMAPYGQTMPANTYIKNDMAPPTARTSGGPSDVEQADVKADRYAQTNGHVSNGAGEPVPEHEPEYVQHDSAGYNTNRGSYTYTTNPSVGSLAGDHSQLASDMSGSPSQQNGSGRMTPRTSGAPPQWASGYNTPPRSAAVSSLYNSVSETRGASANGTTDNYSVASNPAPGYSTGMNGPLGSGKRMREDDDVDQIVRPDSRGAEYESKRRKTLTEATVGGPVGGVPLGLQPMKAGGVMARRR.

Disordered regions lie at residues 50–131 and 205–224; these read PALS…NTVG and PGGV…SVSS. Polar residues-rich tracts occupy residues 55 to 69, 76 to 88, and 115 to 131; these read PTAS…SYRT, ASHN…SLSG, and LDSS…NTVG. Positions 272–378 constitute an HTH APSES-type domain; it reads RVTATLWEDE…HNIGGLLYHP (107 aa). Positions 306 to 327 form a DNA-binding region, H-T-H motif; it reads GTKLLNVAGMTRGRRDGILKSE. 3 disordered regions span residues 389–459, 487–543, and 616–789; these read QESQ…ASSL, SIDT…YAPQ, and HDSA…ARRR. 5 stretches are compositionally biased toward polar residues: residues 419 to 438, 487 to 529, 620 to 636, 645 to 667, and 676 to 713; these read LQTP…SQSA, SIDT…SKSY, GYNT…NPSV, QLAS…TPRT, and SGYN…SVAS. Positions 731–758 are nuclear localization domain; it reads KRMREDDDVDQIVRPDSRGAEYESKRRK. Basic and acidic residues predominate over residues 741-754; it reads QIVRPDSRGAEYES.

It belongs to the EFG1/PHD1/stuA family.

Its subcellular location is the nucleus. In terms of biological role, transcription factor that regulates asexual reproduction. Binds the StuA-response elements (StRE) with the consensus sequence 5'-(A/T)CGCG(T/A)N(A/C)-3' at the promoters of target genes. The chain is Cell pattern formation-associated protein stuA from Aspergillus flavus (strain ATCC 200026 / FGSC A1120 / IAM 13836 / NRRL 3357 / JCM 12722 / SRRC 167).